A 100-amino-acid polypeptide reads, in one-letter code: Large ribosomal subunit protein uL23 (100 aa).

It belongs to the universal ribosomal protein uL23 family. In terms of assembly, part of the 50S ribosomal subunit. Contacts protein L29, and trigger factor when it is bound to the ribosome.

Functionally, one of the early assembly proteins it binds 23S rRNA. One of the proteins that surrounds the polypeptide exit tunnel on the outside of the ribosome. Forms the main docking site for trigger factor binding to the ribosome. This chain is Large ribosomal subunit protein uL23, found in Photobacterium profundum (strain SS9).